Consider the following 142-residue polypeptide: Lysozyme 2 (142 aa).

Positions 1–20 (MLKLTLTILAAVLLVTPAFG) are cleaved as a signal peptide. The C-type lysozyme domain maps to 21 to 142 (KVYTRCSLAR…HTLPSIDDCF (122 aa)). Disulfide bonds link Cys26/Cys141, Cys47/Cys131, Cys82/Cys98, and Cys94/Cys112. Glu52 is a catalytic residue. N-linked (GlcNAc...) asparagine glycosylation occurs at Asn66. Asp70 is an active-site residue.

This sequence belongs to the glycosyl hydrolase 22 family. As to expression, expressed only in the midgut where it is concentrated around the middle in all larval stages.

The protein localises to the secreted. The catalysed reaction is Hydrolysis of (1-&gt;4)-beta-linkages between N-acetylmuramic acid and N-acetyl-D-glucosamine residues in a peptidoglycan and between N-acetyl-D-glucosamine residues in chitodextrins.. Its function is as follows. Lysozymes have primarily a bacteriolytic function. Shows antibacterial activity against Gram-positive bacterium M.luteus but shows no activity against Gram-negative bacterium E.coli. Likely to play a role in the eradication of ingested pathogens during their passage through the intestine. This is Lysozyme 2 from Lucilia sericata (Green bottle fly).